A 463-amino-acid polypeptide reads, in one-letter code: MDITLVKSLYREAEKYMDKEVKINGWVRTVRDSKNFAFVEVNDGSFFKNVQVILESSLENFKELCKMPISTSVEVEGIIQPTPNAKQPFEIKATRVSIEGKSSTDYPLQKKRHTFEYLRTIAHLRPRSNAFSAVFRVRSLAAYAVHKFFQERGFVYTNTPIITGSDCEGAGEMFQLTTMDLNNIPKTEEGKIDFSKDFFGSPANLTVSGQLSAETFALAFRNVYTFGPTFRAENSNTARHASEFWMIEPEMAFAELTDYLDNAENMVKFVINYVMENAPEEMAFFNSFVDKGLFDRLDNVVNSDFKRITYTEAVELLQKSGGKFDYEVEWGIDLQTEHERYLTEQIFKKPVFVTDYPKDIKAFYMRLNDDGKTVAAADLLVPGVGEIIGGSQREERLDVLEKRMEELNLNKEDYWWYLELRKYGETKHSGYGLGFERILMYITGMTNIRDVIPFPRTPGSAEF.

Belongs to the class-II aminoacyl-tRNA synthetase family. In terms of assembly, homodimer.

The protein resides in the cytoplasm. The enzyme catalyses tRNA(Asn) + L-asparagine + ATP = L-asparaginyl-tRNA(Asn) + AMP + diphosphate + H(+). The polypeptide is Asparagine--tRNA ligase (Clostridium botulinum (strain Langeland / NCTC 10281 / Type F)).